A 224-amino-acid chain; its full sequence is GrpE protein homolog 2, mitochondrial (224 aa).

A mitochondrion-targeting transit peptide spans 1-31 (MAARSLWAVQRLQRLLASGAMSESRGWLHPF). At Lys141 the chain carries N6-acetyllysine.

The protein belongs to the GrpE family. As to quaternary structure, probable component of the PAM complex at least composed of a mitochondrial HSP70 protein, GRPEL1 or GRPEL2, TIMM44, TIMM16/PAM16 and TIMM14/DNAJC19. In terms of tissue distribution, ubiquitous.

The protein resides in the mitochondrion matrix. In terms of biological role, essential component of the PAM complex, a complex required for the translocation of transit peptide-containing proteins from the inner membrane into the mitochondrial matrix in an ATP-dependent manner. Seems to control the nucleotide-dependent binding of mitochondrial HSP70 to substrate proteins. Stimulates ATPase activity of mt-HSP70. May also serve to modulate the interconversion of oligomeric (inactive) and monomeric (active) forms of mt-HSP70. The sequence is that of GrpE protein homolog 2, mitochondrial (Grpel2) from Mus musculus (Mouse).